The following is a 550-amino-acid chain: Dihydroxy-acid dehydratase (550 aa).

Position 78 (Asp-78) interacts with Mg(2+). Cys-119 provides a ligand contact to [2Fe-2S] cluster. Mg(2+) is bound by residues Asp-120 and Lys-121. At Lys-121 the chain carries N6-carboxylysine. A [2Fe-2S] cluster-binding site is contributed by Cys-191. A Mg(2+)-binding site is contributed by Glu-440. Ser-466 functions as the Proton acceptor in the catalytic mechanism.

This sequence belongs to the IlvD/Edd family. As to quaternary structure, homodimer. [2Fe-2S] cluster is required as a cofactor. It depends on Mg(2+) as a cofactor.

It catalyses the reaction (2R)-2,3-dihydroxy-3-methylbutanoate = 3-methyl-2-oxobutanoate + H2O. The catalysed reaction is (2R,3R)-2,3-dihydroxy-3-methylpentanoate = (S)-3-methyl-2-oxopentanoate + H2O. It functions in the pathway amino-acid biosynthesis; L-isoleucine biosynthesis; L-isoleucine from 2-oxobutanoate: step 3/4. The protein operates within amino-acid biosynthesis; L-valine biosynthesis; L-valine from pyruvate: step 3/4. Functionally, functions in the biosynthesis of branched-chain amino acids. Catalyzes the dehydration of (2R,3R)-2,3-dihydroxy-3-methylpentanoate (2,3-dihydroxy-3-methylvalerate) into 2-oxo-3-methylpentanoate (2-oxo-3-methylvalerate) and of (2R)-2,3-dihydroxy-3-methylbutanoate (2,3-dihydroxyisovalerate) into 2-oxo-3-methylbutanoate (2-oxoisovalerate), the penultimate precursor to L-isoleucine and L-valine, respectively. In Methanococcus aeolicus (strain ATCC BAA-1280 / DSM 17508 / OCM 812 / Nankai-3), this protein is Dihydroxy-acid dehydratase.